Here is a 291-residue protein sequence, read N- to C-terminus: Small ribosomal subunit biogenesis GTPase RsgA (291 aa).

Residues glutamate 63–leucine 221 form the CP-type G domain. GTP contacts are provided by residues threonine 112–aspartate 115 and glycine 164–threonine 172. Positions 245, 250, 252, and 258 each coordinate Zn(2+).

The protein belongs to the TRAFAC class YlqF/YawG GTPase family. RsgA subfamily. In terms of assembly, monomer. Associates with 30S ribosomal subunit, binds 16S rRNA. Zn(2+) serves as cofactor.

Its subcellular location is the cytoplasm. In terms of biological role, one of several proteins that assist in the late maturation steps of the functional core of the 30S ribosomal subunit. Helps release RbfA from mature subunits. May play a role in the assembly of ribosomal proteins into the subunit. Circularly permuted GTPase that catalyzes slow GTP hydrolysis, GTPase activity is stimulated by the 30S ribosomal subunit. In Staphylococcus aureus (strain COL), this protein is Small ribosomal subunit biogenesis GTPase RsgA.